The primary structure comprises 350 residues: Hydroxymethylglutaryl-CoA synthase (350 aa).

The Proton donor/acceptor role is filled by glutamate 83. The active-site Acyl-thioester intermediate is the cysteine 115. 2 residues coordinate (3S)-3-hydroxy-3-methylglutaryl-CoA: cysteine 115 and threonine 156. Arginine 204 lines the CoA pocket. (3S)-3-hydroxy-3-methylglutaryl-CoA is bound by residues threonine 206 and histidine 239. Residue histidine 239 is the Proton donor/acceptor of the active site. Residue lysine 244 coordinates CoA. Asparagine 271 and serine 301 together coordinate (3S)-3-hydroxy-3-methylglutaryl-CoA.

The protein belongs to the thiolase-like superfamily. Archaeal HMG-CoA synthase family. Interacts with acetoacetyl-CoA thiolase that catalyzes the precedent step in the pathway and with a DUF35 protein. The acetoacetyl-CoA thiolase/HMG-CoA synthase complex channels the intermediate via a fused CoA-binding site, which allows for efficient coupling of the endergonic thiolase reaction with the exergonic HMGCS reaction.

It catalyses the reaction acetoacetyl-CoA + acetyl-CoA + H2O = (3S)-3-hydroxy-3-methylglutaryl-CoA + CoA + H(+). It participates in metabolic intermediate biosynthesis; (R)-mevalonate biosynthesis; (R)-mevalonate from acetyl-CoA: step 2/3. Functionally, catalyzes the condensation of acetyl-CoA with acetoacetyl-CoA to form 3-hydroxy-3-methylglutaryl-CoA (HMG-CoA). Functions in the mevalonate (MVA) pathway leading to isopentenyl diphosphate (IPP), a key precursor for the biosynthesis of isoprenoid compounds that are building blocks of archaeal membrane lipids. The protein is Hydroxymethylglutaryl-CoA synthase of Thermococcus gammatolerans (strain DSM 15229 / JCM 11827 / EJ3).